Reading from the N-terminus, the 311-residue chain is MKVAVLGAAGGIGQALALLLKLQLPAGTDLALYDIAPVTPGVAVDVSHIPTAVNVKGFSGEDPTPALEGADVVLISAGVARKPGMDRSDLFNINAGIVRGLIEKVAVTCPKACVGIITNPVNTTVAIAAEVLKKAGVYDKRKLFGVTTLDVLRSETFVAELKGLNVSRTSVPVIGGHSGVTILPLLSQVQYAKWNEDEIEPLTKRIQNAGTEVVNAKAGGGSATLSMAQAAARFARSLVKGLSGETVVECTYVEGDGKYARFFSQPVRLGKEGVEEILPIGPLSNFEQQALENMLPTLHADIELGEKFING.

NAD(+) is bound by residues 7 to 13 (GAAGGIG) and Asp34. Substrate is bound by residues Arg81 and Arg87. NAD(+) contacts are provided by residues Asn94 and 117-119 (ITN). Substrate contacts are provided by Asn119 and Arg153. The active-site Proton acceptor is His177. Met227 is an NAD(+) binding site.

The protein belongs to the LDH/MDH superfamily. MDH type 1 family. In terms of assembly, homodimer.

The enzyme catalyses (S)-malate + NAD(+) = oxaloacetate + NADH + H(+). Functionally, catalyzes the reversible oxidation of malate to oxaloacetate. This Haemophilus influenzae (strain PittEE) protein is Malate dehydrogenase.